Consider the following 264-residue polypeptide: Versicolorin reductase stcU (264 aa).

NADP(+) contacts are provided by Ile-23, Asp-69, Asn-96, and Arg-129. Catalysis depends on proton donor residues Ser-145 and Ser-146. NADP(+)-binding residues include Tyr-160, Lys-164, Ile-193, and Thr-195. Tyr-160 (proton acceptor) is an active-site residue. Catalysis depends on Lys-164, which acts as the Lowers pKa of active site Tyr.

This sequence belongs to the short-chain dehydrogenases/reductases (SDR) family.

It carries out the reaction (4S,8R)-2,13,16,20-tetrahydroxy-7,9-dioxapentacyclo[10.8.0.0(3,10).0(4,8).0(14,19)]icosa-1(12),2,5,10,13,16,19-heptaen-18-one + NADPH + H(+) = (4S,8R,16R)-2,13,16,20-tetrahydroxy-7,9-dioxapentacyclo[10.8.0.0(3,10).0(4,8).0(14,19)]icosa-1(12),2,5,10,13,19-hexaen-18-one + NADP(+). It functions in the pathway mycotoxin biosynthesis; sterigmatocystin biosynthesis. Its function is as follows. Versicolorin reductase; part of the gene cluster that mediates the biosynthesis of sterigmatocystin (ST), a polyketide-derived furanocoumarin which is part of the most toxic and carcinogenic compounds among the known mycotoxins. The first step in the biosynthesis of sterigmatocystin is the production of hexanoate by the fatty acid synthase (FAS) units stcJ and stcK. The polyketide backbone is assembled by the non-reducing polyketide synthase stcA by condensation of the starter hexanoyl-CoA and 7 malonyl-CoA extender units followed by cyclization and release of norsolorinic acid. Norsolorinic acid is the first stable intermediate in the biosynthesis of sterigmatocystin and is converted into averantin (AVN) by the ketoreductase stcE which reduces the hexanoate ketone to an alcohol. Averantin is then oxidized into 5'-hydroxyaverantin (HAVN) by the cytochrome P450 monooxygenase stcF. 5'-hydroxyaverantin is further converted to 5'-oxyaverantin (OAVN) by the 5'-hydroxyaverantin dehydrogenase stcG. The next step is the conversion of OAVN into averufin (AVF) which is catalyzed by a yet to be identified enzyme. The cytochrome P450 monooxygenase stcB and the flavin-binding monooxygenase stcW are both required for the conversion of averufin to 1-hydroxyversicolorone. The esterase stcI probably catalyzes the formation of versiconal hemiacetal acetate from 1-hydroxyversicolorone. The oxydoreductase stcN then probably catalyzes the biosynthetic step from versiconal to versicolorin B (VERB). The next step is performed by the versicolorin B desaturase stcL to produce versicolorin A (VERA). The ketoreductase stcU and the cytochrome P450 monooxygenase stcS are involved in the conversion of versicolorin A to demethylsterigmatocystin. The Baeyer-Villiger oxidas stcQ and the reductase stcR might be involved in the biosynthetic step from versicolorin A to demethylsterigmatocystin. The final step in the biosynthesis of sterigmatocystin is the methylation of demethylsterigmatocystin catalyzed by the methyltransferase stcP. The polypeptide is Versicolorin reductase stcU (Emericella nidulans (strain FGSC A4 / ATCC 38163 / CBS 112.46 / NRRL 194 / M139) (Aspergillus nidulans)).